The following is an 88-amino-acid chain: DNA-directed RNA polymerase subunit omega (88 aa).

It belongs to the RNA polymerase subunit omega family. In terms of assembly, the RNAP catalytic core consists of 2 alpha, 1 beta, 1 beta' and 1 omega subunit. When a sigma factor is associated with the core the holoenzyme is formed, which can initiate transcription.

It carries out the reaction RNA(n) + a ribonucleoside 5'-triphosphate = RNA(n+1) + diphosphate. Promotes RNA polymerase assembly. Latches the N- and C-terminal regions of the beta' subunit thereby facilitating its interaction with the beta and alpha subunits. The sequence is that of DNA-directed RNA polymerase subunit omega from Kineococcus radiotolerans (strain ATCC BAA-149 / DSM 14245 / SRS30216).